A 255-amino-acid chain; its full sequence is Imidazole glycerol phosphate synthase subunit HisF (255 aa).

Active-site residues include Asp-12 and Asp-131.

This sequence belongs to the HisA/HisF family. In terms of assembly, heterodimer of HisH and HisF.

Its subcellular location is the cytoplasm. It carries out the reaction 5-[(5-phospho-1-deoxy-D-ribulos-1-ylimino)methylamino]-1-(5-phospho-beta-D-ribosyl)imidazole-4-carboxamide + L-glutamine = D-erythro-1-(imidazol-4-yl)glycerol 3-phosphate + 5-amino-1-(5-phospho-beta-D-ribosyl)imidazole-4-carboxamide + L-glutamate + H(+). Its pathway is amino-acid biosynthesis; L-histidine biosynthesis; L-histidine from 5-phospho-alpha-D-ribose 1-diphosphate: step 5/9. Its function is as follows. IGPS catalyzes the conversion of PRFAR and glutamine to IGP, AICAR and glutamate. The HisF subunit catalyzes the cyclization activity that produces IGP and AICAR from PRFAR using the ammonia provided by the HisH subunit. The polypeptide is Imidazole glycerol phosphate synthase subunit HisF (Salinispora tropica (strain ATCC BAA-916 / DSM 44818 / JCM 13857 / NBRC 105044 / CNB-440)).